The chain runs to 323 residues: Aspartate carbamoyltransferase catalytic subunit (323 aa).

Residues Arg-55 and Thr-56 each contribute to the carbamoyl phosphate site. Lys-83 is an L-aspartate binding site. Carbamoyl phosphate is bound by residues Arg-105, His-133, and Gln-136. The L-aspartate site is built by Arg-166 and Arg-220. Gly-261 and Pro-262 together coordinate carbamoyl phosphate.

It belongs to the aspartate/ornithine carbamoyltransferase superfamily. ATCase family. In terms of assembly, heterododecamer (2C3:3R2) of six catalytic PyrB chains organized as two trimers (C3), and six regulatory PyrI chains organized as three dimers (R2).

It carries out the reaction carbamoyl phosphate + L-aspartate = N-carbamoyl-L-aspartate + phosphate + H(+). It participates in pyrimidine metabolism; UMP biosynthesis via de novo pathway; (S)-dihydroorotate from bicarbonate: step 2/3. In terms of biological role, catalyzes the condensation of carbamoyl phosphate and aspartate to form carbamoyl aspartate and inorganic phosphate, the committed step in the de novo pyrimidine nucleotide biosynthesis pathway. In Acidothermus cellulolyticus (strain ATCC 43068 / DSM 8971 / 11B), this protein is Aspartate carbamoyltransferase catalytic subunit.